The following is a 320-amino-acid chain: Beta-carotene 4-ketolase 3 (320 aa).

The catalysed reaction is echinenone + 2 AH2 + 2 O2 = canthaxanthin + 2 A + 3 H2O. The enzyme catalyses all-trans-beta-carotene + 2 AH2 + 2 O2 = echinenone + 2 A + 3 H2O. It functions in the pathway carotenoid biosynthesis. Functionally, involved in the biosynthesis of ketocarotenoids which are powerful anti-oxidative molecules. Catalyzes the conversion of beta-carotene to canthaxanthin via echinenone. The polypeptide is Beta-carotene 4-ketolase 3 (Haematococcus lacustris (Green alga)).